The following is a 652-amino-acid chain: tRNA 5-methylaminomethyl-2-thiouridine biosynthesis bifunctional protein MnmC (652 aa).

Residues 1–235 form a tRNA (mnm(5)s(2)U34)-methyltransferase region; the sequence is MPDRLVPATL…EPALRVGEYA (235 aa). The interval 259–652 is FAD-dependent cmnm(5)s(2)U34 oxidoreductase; it reads IGAGLAGCAV…IRALRGRQIG (394 aa).

This sequence in the N-terminal section; belongs to the methyltransferase superfamily. tRNA (mnm(5)s(2)U34)-methyltransferase family. In the C-terminal section; belongs to the DAO family. It depends on FAD as a cofactor.

The protein localises to the cytoplasm. It catalyses the reaction 5-aminomethyl-2-thiouridine(34) in tRNA + S-adenosyl-L-methionine = 5-methylaminomethyl-2-thiouridine(34) in tRNA + S-adenosyl-L-homocysteine + H(+). In terms of biological role, catalyzes the last two steps in the biosynthesis of 5-methylaminomethyl-2-thiouridine (mnm(5)s(2)U) at the wobble position (U34) in tRNA. Catalyzes the FAD-dependent demodification of cmnm(5)s(2)U34 to nm(5)s(2)U34, followed by the transfer of a methyl group from S-adenosyl-L-methionine to nm(5)s(2)U34, to form mnm(5)s(2)U34. The protein is tRNA 5-methylaminomethyl-2-thiouridine biosynthesis bifunctional protein MnmC of Burkholderia ambifaria (strain ATCC BAA-244 / DSM 16087 / CCUG 44356 / LMG 19182 / AMMD) (Burkholderia cepacia (strain AMMD)).